The sequence spans 394 residues: RNA demethylase ALKBH5 (394 aa).

Disordered stretches follow at residues 1 to 26 (MAAA…YKAG) and 48 to 83 (AEPY…EEAR). A2 bears the N-acetylalanine mark. A Glycyl lysine isopeptide (Lys-Gly) (interchain with G-Cter in ubiquitin) cross-link involves residue K57. Positions 59–83 (KYPEDSDPERSDFEEQQLQKEEEAR) are enriched in basic and acidic residues. Phosphoserine occurs at positions 64 and 69. Positions 67–116 (ERSDFEEQQLQKEEEARKVKSGIRQMRLFSQDECAKIEARIDEVVSRAEK) form a coiled coil. K86 is covalently cross-linked (Glycyl lysine isopeptide (Lys-Gly) (interchain with G-Cter in SUMO1)). S87 carries the phosphoserine modification. The residue at position 132 (K132) is an N6-acetyllysine. Y139 is an active-site residue. 2-oxoglutarate-binding residues include N193, Y195, and H204. An intrachain disulfide couples C230 to C267. K235 bears the N6-acetyllysine mark. 2-oxoglutarate-binding residues include H266 and R277. The interval 298 to 394 (SSSVLPPSYA…PARKVKMRRH (97 aa)) is disordered. K321 is covalently cross-linked (Glycyl lysine isopeptide (Lys-Gly) (interchain with G-Cter in SUMO1)). Position 325 is a phosphoserine (S325). K328 is covalently cross-linked (Glycyl lysine isopeptide (Lys-Gly) (interchain with G-Cter in SUMO2)). A compositionally biased stretch (basic and acidic residues) spans 328–349 (KADPDAAHRPRILEMDKEENRR). 2 positions are modified to phosphoserine: S371 and S384.

This sequence belongs to the alkB family. Monomer. Interacts with RBM33; promoting desumoylation by SENP1 and recruitment to N(6)-methyladenosine-containing mRNAs. Interacts (when acetylated by KAT8) with PSPC1; interaction facilitates recognition of N(6)-methyladenosine (m6A) mRNA. The cofactor is Fe(2+). In terms of processing, phosphorylated at Ser-87 and Ser-325 in response to reactive oxygen species (ROS), promoting sumoylation and inactivation. Acetylated by KAT8 at Lys-235, promoting interaction with PSPC1, thereby facilitating recognition of N(6)-methyladenosine (m6A) mRNA by ALKBH5. Deacetylated at Lys-235 by HDAC7. Post-translationally, sumoylated at Lys-86 and Lys-321 by PIAS4 following phosphorylation at Ser-87 and Ser-325 in response to reactive oxygen species (ROS), inhibiting the RNA demethylase activity. Desumoylated by SENP1; relieving RNA demethylase inhibition, leading to N(6)-methyladenosine-containing mRNAs demethylation. In terms of processing, ubiquitinated at Lys-57 via 'Lys-48'-linked polyubiquitin chain, leading to its degradation by the proteasome. Deubiquitinated at Lys-57 by USP9X, promoting its stabilizazion.

The protein resides in the nucleus speckle. It catalyses the reaction an N(6)-methyladenosine in mRNA + 2-oxoglutarate + O2 = an adenosine in mRNA + formaldehyde + succinate + CO2. RNA demethylase activity is inhibited following sumoylation. Inhibition is relieved following desumoylation. Functionally, dioxygenase that specifically demethylates N(6)-methyladenosine (m6A) RNA, the most prevalent internal modification of messenger RNA (mRNA) in higher eukaryotes. Demethylates RNA by oxidative demethylation, which requires molecular oxygen, alpha-ketoglutarate and iron. Demethylation of m6A mRNA affects mRNA processing, translation and export. Can also demethylate N(6)-methyladenosine in single-stranded DNA (in vitro). Required for the late meiotic and haploid phases of spermatogenesis by mediating m6A demethylation in spermatocytes and round spermatids: m6A demethylation of target transcripts is required for correct splicing and the production of longer 3'-UTR mRNAs in male germ cells. Involved in paraspeckle assembly, a nuclear membraneless organelle, by undergoing liquid-liquid phase separation. Paraspeckle assembly is coupled with m6A demethylation of RNAs, such as NEAT1 non-coding RNA. Also acts as a negative regulator of T-cell development: inhibits gamma-delta T-cell proliferation via demethylation of JAG1 and NOTCH2 transcripts. Inhibits regulatory T-cell (Treg) recruitment by mediating demethylation and destabilization of CCL28 mRNAs. This chain is RNA demethylase ALKBH5 (ALKBH5), found in Bos taurus (Bovine).